The primary structure comprises 275 residues: NH(3)-dependent NAD(+) synthetase (275 aa).

46 to 53 is an ATP binding site; the sequence is GISGGQDS. Residue Asp-52 participates in Mg(2+) binding. Residue Arg-140 coordinates deamido-NAD(+). Thr-160 serves as a coordination point for ATP. Glu-165 contacts Mg(2+). 2 residues coordinate deamido-NAD(+): Lys-173 and Asp-180. ATP-binding residues include Lys-189 and Thr-211. 260–261 provides a ligand contact to deamido-NAD(+); that stretch reads HK.

The protein belongs to the NAD synthetase family. Homodimer.

It catalyses the reaction deamido-NAD(+) + NH4(+) + ATP = AMP + diphosphate + NAD(+) + H(+). It functions in the pathway cofactor biosynthesis; NAD(+) biosynthesis; NAD(+) from deamido-NAD(+) (ammonia route): step 1/1. Catalyzes the ATP-dependent amidation of deamido-NAD to form NAD. Uses ammonia as a nitrogen source. The protein is NH(3)-dependent NAD(+) synthetase of Salmonella typhi.